Consider the following 308-residue polypeptide: Porphobilinogen deaminase (308 aa).

C242 is subject to S-(dipyrrolylmethanemethyl)cysteine.

Belongs to the HMBS family. As to quaternary structure, monomer. The cofactor is dipyrromethane.

The catalysed reaction is 4 porphobilinogen + H2O = hydroxymethylbilane + 4 NH4(+). It participates in porphyrin-containing compound metabolism; protoporphyrin-IX biosynthesis; coproporphyrinogen-III from 5-aminolevulinate: step 2/4. Functionally, tetrapolymerization of the monopyrrole PBG into the hydroxymethylbilane pre-uroporphyrinogen in several discrete steps. The chain is Porphobilinogen deaminase from Alkalilimnicola ehrlichii (strain ATCC BAA-1101 / DSM 17681 / MLHE-1).